Reading from the N-terminus, the 242-residue chain is ATP synthase subunit a, chloroplastic (242 aa).

5 consecutive transmembrane segments (helical) span residues 34–54, 93–113, 132–152, 188–210, and 222–242; these read GQVLVVVWFVLALLLLFAVLG, VPFIGTLFLFIFGCNWAGAII, INTTVALALLTSLAYFYAGLS, LFGNVLADELTITVLTSLVPLVI, and GSVQALIFSTLAAAYIAEALE.

The protein belongs to the ATPase A chain family. In terms of assembly, F-type ATPases have 2 components, CF(1) - the catalytic core - and CF(0) - the membrane proton channel. CF(1) has five subunits: alpha(3), beta(3), gamma(1), delta(1), epsilon(1). CF(0) has four main subunits: a, b, b' and c.

The protein resides in the plastid. The protein localises to the chloroplast thylakoid membrane. Functionally, key component of the proton channel; it plays a direct role in the translocation of protons across the membrane. The chain is ATP synthase subunit a, chloroplastic from Trieres chinensis (Marine centric diatom).